The primary structure comprises 129 residues: Follitropin subunit beta (129 aa).

The N-terminal stretch at 1 to 20 (MKSVQFCFLFCCWRAICCRS) is a signal peptide. Intrachain disulfides connect Cys21–Cys69, Cys35–Cys84, Cys38–Cys122, Cys46–Cys100, Cys50–Cys102, and Cys105–Cys112. N-linked (GlcNAc...) asparagine glycosylation is found at Asn25 and Asn42.

Belongs to the glycoprotein hormones subunit beta family. Heterodimer. The active follitropin is a heterodimer composed of an alpha chain/CGA shared with other hormones and a unique beta chain/FSHB shown here.

It localises to the secreted. Together with the alpha chain CGA constitutes follitropin, the follicle-stimulating hormone, and provides its biological specificity to the hormone heterodimer. Binds FSHR, a G protein-coupled receptor, on target cells to activate downstream signaling pathways. Follitropin is involved in follicle development and spermatogenesis in reproductive organs. This Bubalus bubalis (Domestic water buffalo) protein is Follitropin subunit beta (FSHB).